A 367-amino-acid chain; its full sequence is Phosphoribosylaminoimidazole-succinocarboxamide synthase (367 aa).

This sequence belongs to the SAICAR synthetase family.

It catalyses the reaction 5-amino-1-(5-phospho-D-ribosyl)imidazole-4-carboxylate + L-aspartate + ATP = (2S)-2-[5-amino-1-(5-phospho-beta-D-ribosyl)imidazole-4-carboxamido]succinate + ADP + phosphate + 2 H(+). Its pathway is purine metabolism; IMP biosynthesis via de novo pathway; 5-amino-1-(5-phospho-D-ribosyl)imidazole-4-carboxamide from 5-amino-1-(5-phospho-D-ribosyl)imidazole-4-carboxylate: step 1/2. The polypeptide is Phosphoribosylaminoimidazole-succinocarboxamide synthase (Aeromonas salmonicida (strain A449)).